Here is a 559-residue protein sequence, read N- to C-terminus: Potassium-transporting ATPase potassium-binding subunit (559 aa).

13 helical membrane-spanning segments follow: residues G5 to S25, L27 to W47, L63 to W83, G132 to I152, L170 to I190, L253 to A273, L283 to V303, F327 to V347, A356 to V376, G379 to G399, M416 to M436, L484 to A504, and G524 to I544.

Belongs to the KdpA family. In terms of assembly, the system is composed of three essential subunits: KdpA, KdpB and KdpC.

Its subcellular location is the cell inner membrane. Its function is as follows. Part of the high-affinity ATP-driven potassium transport (or Kdp) system, which catalyzes the hydrolysis of ATP coupled with the electrogenic transport of potassium into the cytoplasm. This subunit binds the periplasmic potassium ions and delivers the ions to the membrane domain of KdpB through an intramembrane tunnel. This chain is Potassium-transporting ATPase potassium-binding subunit, found in Salmonella newport (strain SL254).